A 448-amino-acid chain; its full sequence is Probable glycine dehydrogenase (decarboxylating) subunit 1 (448 aa).

Belongs to the GcvP family. N-terminal subunit subfamily. As to quaternary structure, the glycine cleavage system is composed of four proteins: P, T, L and H. In this organism, the P 'protein' is a heterodimer of two subunits.

The catalysed reaction is N(6)-[(R)-lipoyl]-L-lysyl-[glycine-cleavage complex H protein] + glycine + H(+) = N(6)-[(R)-S(8)-aminomethyldihydrolipoyl]-L-lysyl-[glycine-cleavage complex H protein] + CO2. Its function is as follows. The glycine cleavage system catalyzes the degradation of glycine. The P protein binds the alpha-amino group of glycine through its pyridoxal phosphate cofactor; CO(2) is released and the remaining methylamine moiety is then transferred to the lipoamide cofactor of the H protein. This is Probable glycine dehydrogenase (decarboxylating) subunit 1 from Staphylococcus aureus (strain USA300).